A 56-amino-acid chain; its full sequence is Large ribosomal subunit protein bL33 (56 aa).

Belongs to the bacterial ribosomal protein bL33 family.

The sequence is that of Large ribosomal subunit protein bL33 from Haemophilus influenzae (strain 86-028NP).